Reading from the N-terminus, the 297-residue chain is Ribosomal RNA small subunit methyltransferase H (297 aa).

S-adenosyl-L-methionine is bound by residues 34–36, D54, F81, D99, and Q106; that span reads GGH.

Belongs to the methyltransferase superfamily. RsmH family.

Its subcellular location is the cytoplasm. It carries out the reaction cytidine(1402) in 16S rRNA + S-adenosyl-L-methionine = N(4)-methylcytidine(1402) in 16S rRNA + S-adenosyl-L-homocysteine + H(+). Specifically methylates the N4 position of cytidine in position 1402 (C1402) of 16S rRNA. This Chlamydia pneumoniae (Chlamydophila pneumoniae) protein is Ribosomal RNA small subunit methyltransferase H.